A 415-amino-acid chain; its full sequence is Esterase FrsA (415 aa).

It belongs to the FrsA family.

The enzyme catalyses a carboxylic ester + H2O = an alcohol + a carboxylate + H(+). Catalyzes the hydrolysis of esters. This chain is Esterase FrsA, found in Yersinia enterocolitica serotype O:8 / biotype 1B (strain NCTC 13174 / 8081).